The following is a 417-amino-acid chain: Serine hydroxymethyltransferase 1 (417 aa).

(6S)-5,6,7,8-tetrahydrofolate-binding positions include L121 and 125-127 (GHL). K229 is subject to N6-(pyridoxal phosphate)lysine. A (6S)-5,6,7,8-tetrahydrofolate-binding site is contributed by 355-357 (SPF).

Belongs to the SHMT family. As to quaternary structure, homodimer. Pyridoxal 5'-phosphate is required as a cofactor.

The protein localises to the cytoplasm. The enzyme catalyses (6R)-5,10-methylene-5,6,7,8-tetrahydrofolate + glycine + H2O = (6S)-5,6,7,8-tetrahydrofolate + L-serine. Its pathway is one-carbon metabolism; tetrahydrofolate interconversion. The protein operates within amino-acid biosynthesis; glycine biosynthesis; glycine from L-serine: step 1/1. Catalyzes the reversible interconversion of serine and glycine with tetrahydrofolate (THF) serving as the one-carbon carrier. This reaction serves as the major source of one-carbon groups required for the biosynthesis of purines, thymidylate, methionine, and other important biomolecules. Also exhibits THF-independent aldolase activity toward beta-hydroxyamino acids, producing glycine and aldehydes, via a retro-aldol mechanism. This Pectobacterium atrosepticum (strain SCRI 1043 / ATCC BAA-672) (Erwinia carotovora subsp. atroseptica) protein is Serine hydroxymethyltransferase 1.